Here is a 172-residue protein sequence, read N- to C-terminus: Putative B3 domain-containing protein At1g05615 (172 aa).

A DNA-binding region (TF-B3) is located at residues 69 to 169; the sequence is VDEGKIIDFE…NLAMVPLTPT (101 aa).

It is found in the nucleus. The protein is Putative B3 domain-containing protein At1g05615 of Arabidopsis thaliana (Mouse-ear cress).